The following is a 255-amino-acid chain: Type III pantothenate kinase (255 aa).

Residue 7–14 (DVGNTRLK) participates in ATP binding. Residues Tyr96 and 103–106 (GADR) contribute to the substrate site. The active-site Proton acceptor is Asp105. Thr133 is an ATP binding site. Thr183 serves as a coordination point for substrate.

This sequence belongs to the type III pantothenate kinase family. In terms of assembly, homodimer. The cofactor is NH4(+). K(+) serves as cofactor.

It localises to the cytoplasm. The catalysed reaction is (R)-pantothenate + ATP = (R)-4'-phosphopantothenate + ADP + H(+). The protein operates within cofactor biosynthesis; coenzyme A biosynthesis; CoA from (R)-pantothenate: step 1/5. Functionally, catalyzes the phosphorylation of pantothenate (Pan), the first step in CoA biosynthesis. The sequence is that of Type III pantothenate kinase from Polaromonas sp. (strain JS666 / ATCC BAA-500).